A 274-amino-acid chain; its full sequence is NH(3)-dependent NAD(+) synthetase (274 aa).

27–34 (GLSGGIDS) contributes to the ATP binding site. D33 contributes to the Mg(2+) binding site. R121 contacts deamido-NAD(+). T141 lines the ATP pocket. Position 146 (E146) interacts with Mg(2+). 2 residues coordinate ATP: K170 and S192.

It belongs to the NAD synthetase family. In terms of assembly, homodimer.

It catalyses the reaction deamido-NAD(+) + NH4(+) + ATP = AMP + diphosphate + NAD(+) + H(+). The protein operates within cofactor biosynthesis; NAD(+) biosynthesis; NAD(+) from deamido-NAD(+) (ammonia route): step 1/1. In terms of biological role, catalyzes the ATP-dependent amidation of deamido-NAD to form NAD. Uses ammonia as a nitrogen source. The polypeptide is NH(3)-dependent NAD(+) synthetase (Helicobacter hepaticus (strain ATCC 51449 / 3B1)).